The primary structure comprises 435 residues: Enolase (435 aa).

A (2R)-2-phosphoglycerate-binding site is contributed by Gln-167. Glu-209 functions as the Proton donor in the catalytic mechanism. Residues Asp-246, Glu-292, and Asp-319 each coordinate Mg(2+). (2R)-2-phosphoglycerate is bound by residues Lys-344, Arg-373, Ser-374, and Lys-395. Residue Lys-344 is the Proton acceptor of the active site.

This sequence belongs to the enolase family. Requires Mg(2+) as cofactor.

The protein resides in the cytoplasm. It is found in the secreted. Its subcellular location is the cell surface. The enzyme catalyses (2R)-2-phosphoglycerate = phosphoenolpyruvate + H2O. Its pathway is carbohydrate degradation; glycolysis; pyruvate from D-glyceraldehyde 3-phosphate: step 4/5. Functionally, catalyzes the reversible conversion of 2-phosphoglycerate (2-PG) into phosphoenolpyruvate (PEP). It is essential for the degradation of carbohydrates via glycolysis. The chain is Enolase from Lachnospira eligens (strain ATCC 27750 / DSM 3376 / VPI C15-48 / C15-B4) (Eubacterium eligens).